Consider the following 206-residue polypeptide: Uridine kinase (206 aa).

Residue 11 to 18 coordinates ATP; that stretch reads GGTGSGKS.

Belongs to the uridine kinase family.

Its subcellular location is the cytoplasm. It catalyses the reaction uridine + ATP = UMP + ADP + H(+). It carries out the reaction cytidine + ATP = CMP + ADP + H(+). It participates in pyrimidine metabolism; CTP biosynthesis via salvage pathway; CTP from cytidine: step 1/3. It functions in the pathway pyrimidine metabolism; UMP biosynthesis via salvage pathway; UMP from uridine: step 1/1. The protein is Uridine kinase of Clostridium botulinum (strain Langeland / NCTC 10281 / Type F).